A 419-amino-acid chain; its full sequence is MGIKERNAPSQYKQSSRKNKRAWRKNIDLEDIESGLEQTRDEEIKGGNVEHKPNDALFVIDTLGDDRIAKRSRKKIKPLKVDQILENKSSIEKVHSHLTNNSTESNKKGKIFSRKELNRLQALVYKNKDGLTATSAASELKNTKQPKESYDVWETNPTVTIPVKRPSTLSKLPESLTENNAKVPNVVIADPGMSYNPDAAAWMKLLDTKGSEELKKEQKRISELEEKERIQKKAFEDKGLVSDQDVNHSIDSDDQSEHEQAETPIPSSKNKRKTRSQRNKIRQRREEELRLLEQKKNEELLRTIDKAPAISKKLQQKDKAEKFSNKAVSSSTTEIKLKKKKFGKHRLPNNPLEIKLGDELTSSLRELKPEGNLFADRYLSLQQRAMVPPSLPVLKKSKYRAKIKEKYSHKDFHLQKNSI.

Disordered stretches follow at residues 1–21 (MGIK…KNKR) and 233–283 (KAFE…KIRQ). Over residues 233-261 (KAFEDKGLVSDQDVNHSIDSDDQSEHEQA) the composition is skewed to basic and acidic residues. Phosphoserine is present on residues serine 242, serine 249, serine 252, and serine 256. The span at 269-283 (KNKRKTRSQRNKIRQ) shows a compositional bias: basic residues.

It belongs to the NOP53 family.

Its subcellular location is the nucleus. The protein resides in the nucleolus. The protein localises to the nucleoplasm. Its function is as follows. May play a role in ribosome biogenesis. The polypeptide is Ribosome biogenesis protein NOP53 (Schizosaccharomyces pombe (strain 972 / ATCC 24843) (Fission yeast)).